The following is a 242-amino-acid chain: 7-cyano-7-deazaguanine synthase (242 aa).

14–24 (FSGGQDSATCL) lines the ATP pocket. Cys-202, Cys-217, Cys-220, and Cys-223 together coordinate Zn(2+).

This sequence belongs to the QueC family. Zn(2+) is required as a cofactor.

It catalyses the reaction 7-carboxy-7-deazaguanine + NH4(+) + ATP = 7-cyano-7-deazaguanine + ADP + phosphate + H2O + H(+). The protein operates within purine metabolism; 7-cyano-7-deazaguanine biosynthesis. In terms of biological role, catalyzes the ATP-dependent conversion of 7-carboxy-7-deazaguanine (CDG) to 7-cyano-7-deazaguanine (preQ(0)). The polypeptide is 7-cyano-7-deazaguanine synthase (Rhodopseudomonas palustris (strain BisA53)).